Reading from the N-terminus, the 1562-residue chain is NAC-alpha domain-containing protein 1 (1562 aa).

Over residues 1-13 (MPGEAARAELLLP) the composition is skewed to low complexity. Disordered stretches follow at residues 1-24 (MPGEAARAELLLPEADRPGPRTDL), 56-110 (FLPS…TEAP), 131-226 (SPRA…ADGD), 249-288 (SGWGLSPQGSMVDERELHPAGTPEPPSSESSLSADSSSSW), 327-365 (TPLSPEEEEEEAVADPDPGGDLAGEGEEDSTSASFLQSL), 381-458 (RDDT…GAYL), 503-941 (TPQA…EPLA), and 953-1423 (GCAP…AMSK). Positions 195–208 (GDARDSEAELRDEL) are enriched in basic and acidic residues. Residues 275 to 287 (SSESSLSADSSSS) are compositionally biased toward low complexity. Over residues 331-340 (PEEEEEEAVA) the composition is skewed to acidic residues. Over residues 385–397 (SAASSDSDSASYA) the composition is skewed to low complexity. Polar residues-rich tracts occupy residues 449 to 458 (PQTSDRGAYL) and 550 to 564 (QEETSLTLCPDSPQN). Positions 992 to 1007 (PAALDQVQQDDPQPAA) are enriched in low complexity. Residues 1048 to 1074 (PGREACLEARAHTGDGAKPDSPQKETL) are compositionally biased toward basic and acidic residues. Serine 1068 is modified (phosphoserine). 2 stretches are compositionally biased toward low complexity: residues 1172-1182 (APTSAPTSQQP) and 1231-1241 (APGTLAGAALP). Residues 1254–1264 (PQEDSVEDEEP) are compositionally biased toward acidic residues. Composition is skewed to low complexity over residues 1265–1284 (PGSLGLPPPQAGVQPAAAAV), 1298–1308 (SLSPHSPLLSP), and 1335–1344 (QSPAGPQGLS). A compositionally biased stretch (acidic residues) spans 1348–1357 (QQEDEDSLEE). Position 1354 is a phosphoserine (serine 1354). The region spanning 1411 to 1476 (SRSEKKARKA…AKIEDLSQQV (66 aa)) is the NAC-A/B domain.

This sequence belongs to the NAC-alpha family.

The protein resides in the cytoplasm. It is found in the nucleus. In terms of biological role, may prevent inappropriate targeting of non-secretory polypeptides to the endoplasmic reticulum (ER). May bind to nascent polypeptide chains as they emerge from the ribosome and block their interaction with the signal recognition particle (SRP), which normally targets nascent secretory peptides to the ER. May also reduce the inherent affinity of ribosomes for protein translocation sites in the ER membrane (M sites). The protein is NAC-alpha domain-containing protein 1 (NACAD) of Homo sapiens (Human).